The following is a 354-amino-acid chain: Neutral protease 2 homolog MEP3 (354 aa).

A signal peptide spans 1–19 (MHFTSSLLALVALTTQALA). Positions 20 to 179 (FPLNDLPKRD…QSAIPKLEKR (160 aa)) are excised as a propeptide. Cystine bridges form between Cys-186–Cys-256 and Cys-263–Cys-281. Residue His-305 participates in Zn(2+) binding. Glu-306 is a catalytic residue. The Zn(2+) site is built by His-309 and Asp-320.

Belongs to the peptidase M35 family. It depends on Zn(2+) as a cofactor.

The protein localises to the secreted. It carries out the reaction Preferential cleavage of bonds with hydrophobic residues in P1'. Also 3-Asn-|-Gln-4 and 8-Gly-|-Ser-9 bonds in insulin B chain.. Secreted metalloproteinase that allows assimilation of proteinaceous substrates. Shows high activities on basic nuclear substrates such as histone and protamine. May be involved in virulence. The protein is Neutral protease 2 homolog MEP3 (MEP3) of Coccidioides posadasii (strain C735) (Valley fever fungus).